Here is a 205-residue protein sequence, read N- to C-terminus: Small ribosomal subunit protein uS4 (205 aa).

Residues 1-12 are compositionally biased toward basic residues; that stretch reads MSKRIQAKHKLD. The segment at 1–49 is disordered; it reads MSKRIQAKHKLDRRMGQNIWGRPKSPVNRREYGPGQHGQRRKGKLSDFG. An S4 RNA-binding domain is found at 94–156; it reads RRLDAVIYRA…SKQLEIVVVA (63 aa).

Belongs to the universal ribosomal protein uS4 family. Part of the 30S ribosomal subunit. Contacts protein S5. The interaction surface between S4 and S5 is involved in control of translational fidelity.

One of the primary rRNA binding proteins, it binds directly to 16S rRNA where it nucleates assembly of the body of the 30S subunit. In terms of biological role, with S5 and S12 plays an important role in translational accuracy. The chain is Small ribosomal subunit protein uS4 from Methylobacterium nodulans (strain LMG 21967 / CNCM I-2342 / ORS 2060).